The primary structure comprises 869 residues: DNA mismatch repair protein MutS (869 aa).

624 to 631 provides a ligand contact to ATP; it reads GPNMGGKS.

Belongs to the DNA mismatch repair MutS family.

Functionally, this protein is involved in the repair of mismatches in DNA. It is possible that it carries out the mismatch recognition step. This protein has a weak ATPase activity. The polypeptide is DNA mismatch repair protein MutS (Solibacter usitatus (strain Ellin6076)).